Here is a 670-residue protein sequence, read N- to C-terminus: MKVSSQTTGELAENKFETIYDERYWESPPFKLVSDFEPKGSQPEAIEKLVDGLKKGEPFQTLLGVTGSGKTYTVANVINQIRKPTLVIAHNKTLAAQLYNEFREFFPENRVEYFVSYYDYYQPESYLPAKDQYIEKDAMINPKIEQMRLAATASLMSRQDVIVVASVSCIYGLGNPENFQKMGFELKVGDKVHRKEILEKLIDIQFERNDLELMPGRFRVKGDTIDIIPGYFDDIIRIELFGDEVDRISEVDKQTGQRKEDMDYFFVYPARHYVIPEEEQKSAIQFILEELEERLPELGLLESHRLKQRTLYDMEMIQETGSCKGIENYSRHFDHRQPGEKPFCLLDYFPDDFLLVIDESHQTIPQLHGMYNGDRSRKKSLVDYGFRLPSAFDNRPLKFEEFEKYMKNVIFVSATPADYEREHSSRVVEQIIRPTGLVDPEVEVRPLEGQVRDVMQEIRKIVERGDRALVTTLTKKLAEELTEFLAKNEIKARYLHSDIKTIERTEIIRELRLGKFDVLVGINLLREGLDIPEVGFIGILDADKEGFLRNSKSLIQIIGRAARNSSSRVVLYADNMTDSIKSAVQETERRRSMQIAYNEEHGIVPTTIRKPIREKVVDITDTKHIPKTDIPNVIIELDAEMREAADRLDFERAIQVRELIKKLEKEIKAV.

Residues aspartate 51–arginine 433 enclose the Helicase ATP-binding domain. Position 64-71 (glycine 64–threonine 71) interacts with ATP. The short motif at tyrosine 117–isoleucine 140 is the Beta-hairpin element. Residues aspartate 453–isoleucine 612 enclose the Helicase C-terminal domain. In terms of domain architecture, UVR spans proline 631 to glutamate 666.

Belongs to the UvrB family. Forms a heterotetramer with UvrA during the search for lesions. Interacts with UvrC in an incision complex.

The protein localises to the cytoplasm. Functionally, the UvrABC repair system catalyzes the recognition and processing of DNA lesions. A damage recognition complex composed of 2 UvrA and 2 UvrB subunits scans DNA for abnormalities. Upon binding of the UvrA(2)B(2) complex to a putative damaged site, the DNA wraps around one UvrB monomer. DNA wrap is dependent on ATP binding by UvrB and probably causes local melting of the DNA helix, facilitating insertion of UvrB beta-hairpin between the DNA strands. Then UvrB probes one DNA strand for the presence of a lesion. If a lesion is found the UvrA subunits dissociate and the UvrB-DNA preincision complex is formed. This complex is subsequently bound by UvrC and the second UvrB is released. If no lesion is found, the DNA wraps around the other UvrB subunit that will check the other stand for damage. In Methanosarcina mazei (strain ATCC BAA-159 / DSM 3647 / Goe1 / Go1 / JCM 11833 / OCM 88) (Methanosarcina frisia), this protein is UvrABC system protein B.